We begin with the raw amino-acid sequence, 187 residues long: Endoribonuclease YbeY (187 aa).

The Zn(2+) site is built by His-148, His-152, and His-158.

Belongs to the endoribonuclease YbeY family. Requires Zn(2+) as cofactor.

It is found in the cytoplasm. Its function is as follows. Single strand-specific metallo-endoribonuclease involved in late-stage 70S ribosome quality control and in maturation of the 3' terminus of the 16S rRNA. The sequence is that of Endoribonuclease YbeY from Ralstonia nicotianae (strain ATCC BAA-1114 / GMI1000) (Ralstonia solanacearum).